The sequence spans 675 residues: Transketolase, chloroplastic (675 aa).

Residues histidine 78 and 127–129 contribute to the thiamine diphosphate site; that span reads GPL. Aspartate 168 contributes to the Mg(2+) binding site. Thiamine diphosphate contacts are provided by glycine 169, glutamate 173, and asparagine 198. Positions 198 and 200 each coordinate Mg(2+). Residue histidine 275 participates in thiamine diphosphate binding. Residues histidine 275, arginine 369, and serine 396 each coordinate substrate. Thiamine diphosphate contacts are provided by residues glutamate 423 and 450 to 453; that span reads FTDY. Glutamate 423 acts as the Proton donor in catalysis. Residues histidine 474, aspartate 482, and arginine 533 each contribute to the substrate site.

As to quaternary structure, homodimer. The cofactor is Mg(2+). Ca(2+) is required as a cofactor. Requires Mn(2+) as cofactor. It depends on Co(2+) as a cofactor. Thiamine diphosphate serves as cofactor.

It localises to the plastid. It is found in the chloroplast thylakoid membrane. It catalyses the reaction D-sedoheptulose 7-phosphate + D-glyceraldehyde 3-phosphate = aldehydo-D-ribose 5-phosphate + D-xylulose 5-phosphate. Its pathway is carbohydrate biosynthesis; Calvin cycle. Functionally, catalyzes the reversible transfer of a two-carbon ketol group from fructose-6-phosphate or sedoheptulose-7-phosphate to glyceraldehyde-3-phosphate to yield xylulose-5-phosphate and erythrose-4-phosphate or ribose-5-phosphate, respectively. In Zea mays (Maize), this protein is Transketolase, chloroplastic.